A 757-amino-acid chain; its full sequence is MDYLESLDFPKVVEIVKKYALSDLGRKHLDTLKPTVNPWDELELVEELLNYFNRWGEPPIKGLNDISQEVEKVKSGSPLEPWELLRVSVFLEGCDILKKEFEKREYSRLKETFSRLSSFREFVEEVNRCIEQDGEISDRASPRLREIRTEKKRLSSEIKRKADDFVRTHSQILQEQMYVYRDGRYLFPVKASMKNAVRGIVHHLSSSGATVFLEPDEFVELNNRVRLLEEEERLEISRILRQLTNILLSRLNDLERNVELIARFDSLYARVKFAREFNGTVVKPSSRIRLVNARHPLIPKERVVPINLELPPNKRGFIITGPNMGGKTVTVKTVGLFTALMMSGFPLPCDEGTELKVFPKIMADIGEEQSIEQSLSTFSSHMKKIVEIVKNADSDSLVILDELGSGTDPVEGAALAIAIIEDLLEKGATIFVTTHLTPVKVFAMNHPLLLNASMEFDPETLSPTYRVLVGVPGGSHAFQIAEKLGLDKRIIENARSRLSREEMELEGLIRSLHEKISLLEEEKRKLQKEREEYMKLREKYEEDYKKLRRMKIEEFDKELRELNDYIRKVKKELDQAIHVAKTGSVDEMREAVKTIEKEKKDLEQKRIEEATEEEIKPGDHVKMEGGTSVGKVVEVKSGTALVDFGFLRLKVPVSKLRKTKKEEKKETSTFSYKPSSFRTEIDIRGMTVEEAEPVVKKFIDDLMMNGISKGYIIHGKGTGKLASGVWEILRKDKRVVSFRFGTPSEGGTGVTVVEVKV.

Residue 321–328 (GPNMGGKT) coordinates ATP. The Smr domain occupies 681 to 756 (IDIRGMTVEE…GTGVTVVEVK (76 aa)).

This sequence belongs to the DNA mismatch repair MutS family. MutS2 subfamily. As to quaternary structure, homodimer. Binds to stalled ribosomes, contacting rRNA. Interacts with MutL.

Its activity is regulated as follows. Nuclease activity is stimulated by interaction with MutL and inhibited in the presence of non-hydrolytic ATP (ADPnP). ATPase activity is stimulated by DNA. Functionally, endonuclease that is involved in the suppression of homologous recombination and thus may have a key role in the control of bacterial genetic diversity. Has ATPase activity. Binds to DNA. In terms of biological role, acts as a ribosome collision sensor, splitting the ribosome into its 2 subunits. Detects stalled/collided 70S ribosomes which it binds and splits by an ATP-hydrolysis driven conformational change. Acts upstream of the ribosome quality control system (RQC), a ribosome-associated complex that mediates the extraction of incompletely synthesized nascent chains from stalled ribosomes and their subsequent degradation. Probably generates substrates for RQC. This Thermotoga maritima (strain ATCC 43589 / DSM 3109 / JCM 10099 / NBRC 100826 / MSB8) protein is Endonuclease MutS2.